A 350-amino-acid chain; its full sequence is MDQKASYFINEKLFTEVKPVLFTDLIHHLKIGPSMAKKLMFDYYKQTTNAKYNCVVICCYKDQTIKIIHDLSNIPQQDSIIDCFIYAFNPMDSFIPYYDIIDQKDCLTIKNSYELKVSESSKIIERTKTLEEKSKPLVRPTARSKTTPEETTGRKSKSKDMGLRSTALLAKMKKDRDDKETSRQNELRKRKEENLQKINKQNPEREAQMKELNNLFVEDDLDTEEVNGGSKPNSPKETDSNDKDKNNDDLEDLLETTAEDSLMDVPKIQQTKPSETEHSKEPKSEEEPSSFIDEDGYIVTKRPATSTPPRKPSPVVKRALSSSKKQETPSSNKRLKKQGTLESFFKRKAK.

The tract at residues 131–350 (EEKSKPLVRP…LESFFKRKAK (220 aa)) is disordered. Composition is skewed to basic and acidic residues over residues 146 to 162 (TTPE…KDMG) and 172 to 195 (MKKD…EENL). Thr223 carries the phosphothreonine modification. Residue Ser230 is modified to Phosphoserine. A compositionally biased stretch (basic and acidic residues) spans 234 to 248 (SPKETDSNDKDKNND). A compositionally biased stretch (acidic residues) spans 249 to 262 (DLEDLLETTAEDSL). Over residues 274–286 (SETEHSKEPKSEE) the composition is skewed to basic and acidic residues. Polar residues predominate over residues 320–332 (LSSSKKQETPSSN).

As to quaternary structure, DNA polymerase delta is a heterotrimer of POL3, POL32 and HYS2. POL32 can form homodimers.

Its subcellular location is the nucleus. DNA polymerase delta (DNA polymerase III) participates in chromosomal DNA replication. It is required during synthesis of the leading and lagging DNA strands at the replication fork and binds at/or near replication origins and moves along DNA with the replication fork. It has 3'-5' proofreading exonuclease activity that correct errors arising during DNA replication. It is also involved in DNA synthesis during DNA repair. This is DNA polymerase delta subunit 3 (POL32) from Saccharomyces cerevisiae (strain ATCC 204508 / S288c) (Baker's yeast).